Reading from the N-terminus, the 143-residue chain is Ribonuclease HI (143 aa).

The 136-residue stretch at 1 to 136 (MQEIEIFCDG…CDSLAKLEAQ (136 aa)) folds into the RNase H type-1 domain. Residues Asp-9, Glu-47, Asp-69, and Asp-128 each contribute to the Mg(2+) site.

Belongs to the RNase H family. As to quaternary structure, monomer. Requires Mg(2+) as cofactor.

The protein localises to the cytoplasm. It catalyses the reaction Endonucleolytic cleavage to 5'-phosphomonoester.. Its function is as follows. Endonuclease that specifically degrades the RNA of RNA-DNA hybrids. This Helicobacter pylori (strain ATCC 700392 / 26695) (Campylobacter pylori) protein is Ribonuclease HI (rnhA).